Consider the following 305-residue polypeptide: Ornithine carbamoyltransferase (305 aa).

Carbamoyl phosphate contacts are provided by residues 54 to 57 (STRT), glutamine 81, arginine 105, and 132 to 135 (HPCQ). L-ornithine contacts are provided by residues asparagine 163, aspartate 223, and 227-228 (SM). Carbamoyl phosphate is bound by residues 262 to 263 (CL) and arginine 290.

The protein belongs to the aspartate/ornithine carbamoyltransferase superfamily. OTCase family.

Its subcellular location is the cytoplasm. It carries out the reaction carbamoyl phosphate + L-ornithine = L-citrulline + phosphate + H(+). It functions in the pathway amino-acid biosynthesis; L-arginine biosynthesis; L-arginine from L-ornithine and carbamoyl phosphate: step 1/3. Its function is as follows. Reversibly catalyzes the transfer of the carbamoyl group from carbamoyl phosphate (CP) to the N(epsilon) atom of ornithine (ORN) to produce L-citrulline. The sequence is that of Ornithine carbamoyltransferase from Agrobacterium fabrum (strain C58 / ATCC 33970) (Agrobacterium tumefaciens (strain C58)).